We begin with the raw amino-acid sequence, 199 residues long: Phosphoserine phosphatase RsbX (199 aa).

Residues 11-198 form the PPM-type phosphatase domain; it reads QTLVYQLNKE…DDLTYILGQL (188 aa).

The catalysed reaction is O-phospho-L-serine + H2O = L-serine + phosphate. It catalyses the reaction O-phospho-D-serine + H2O = D-serine + phosphate. Its function is as follows. Negative regulator of sigma-B activity. Dephosphorylates RsbS. Plays a role both in maintaining low sigma-B activity during growth and in reestablishing prestress sigma-B activity after induction. Could have a negative feedback role by indirectly communicating sigma-B protein levels. The sequence is that of Phosphoserine phosphatase RsbX (rsbX) from Bacillus subtilis (strain 168).